Here is a 124-residue protein sequence, read N- to C-terminus: Small ribosomal subunit protein uS13 (124 aa).

The tract at residues 94 to 124 is disordered; sequence GLPLRGQRTKNNSRTRKGKRKTVANKKKATK. The segment covering 100-124 has biased composition (basic residues); that stretch reads QRTKNNSRTRKGKRKTVANKKKATK.

The protein belongs to the universal ribosomal protein uS13 family. Part of the 30S ribosomal subunit. Forms a loose heterodimer with protein S19. Forms two bridges to the 50S subunit in the 70S ribosome.

Located at the top of the head of the 30S subunit, it contacts several helices of the 16S rRNA. In the 70S ribosome it contacts the 23S rRNA (bridge B1a) and protein L5 of the 50S subunit (bridge B1b), connecting the 2 subunits; these bridges are implicated in subunit movement. Contacts the tRNAs in the A and P-sites. The protein is Small ribosomal subunit protein uS13 of Flavobacterium johnsoniae (strain ATCC 17061 / DSM 2064 / JCM 8514 / BCRC 14874 / CCUG 350202 / NBRC 14942 / NCIMB 11054 / UW101) (Cytophaga johnsonae).